The chain runs to 236 residues: tRNA1(Val) (adenine(37)-N6)-methyltransferase (236 aa).

The protein belongs to the methyltransferase superfamily. tRNA (adenine-N(6)-)-methyltransferase family.

The protein localises to the cytoplasm. It carries out the reaction adenosine(37) in tRNA1(Val) + S-adenosyl-L-methionine = N(6)-methyladenosine(37) in tRNA1(Val) + S-adenosyl-L-homocysteine + H(+). Functionally, specifically methylates the adenine in position 37 of tRNA(1)(Val) (anticodon cmo5UAC). In Aeromonas hydrophila subsp. hydrophila (strain ATCC 7966 / DSM 30187 / BCRC 13018 / CCUG 14551 / JCM 1027 / KCTC 2358 / NCIMB 9240 / NCTC 8049), this protein is tRNA1(Val) (adenine(37)-N6)-methyltransferase.